The following is a 603-amino-acid chain: DNA mismatch repair protein MutL (603 aa).

This sequence belongs to the DNA mismatch repair MutL/HexB family.

Functionally, this protein is involved in the repair of mismatches in DNA. It is required for dam-dependent methyl-directed DNA mismatch repair. May act as a 'molecular matchmaker', a protein that promotes the formation of a stable complex between two or more DNA-binding proteins in an ATP-dependent manner without itself being part of a final effector complex. In Sphingopyxis alaskensis (strain DSM 13593 / LMG 18877 / RB2256) (Sphingomonas alaskensis), this protein is DNA mismatch repair protein MutL.